We begin with the raw amino-acid sequence, 262 residues long: ATP synthase subunit a 1 (262 aa).

A run of 5 helical transmembrane segments spans residues 30–50, 91–111, 131–151, 201–221, and 232–252; these read TVHIDSLFFSVLTGLAFILVF, IAPLGLTIFCWIMLMNIMDLI, IVPTADVNITMAMALGVFALM, LFGNMFAGEVVFILIAALMPW, and AIFHILIITIQAFVFMMLTIV.

It belongs to the ATPase A chain family. F-type ATPases have 2 components, CF(1) - the catalytic core - and CF(0) - the membrane proton channel. CF(1) has five subunits: alpha(3), beta(3), gamma(1), delta(1), epsilon(1). CF(0) has three main subunits: a(1), b(2) and c(9-12). The alpha and beta chains form an alternating ring which encloses part of the gamma chain. CF(1) is attached to CF(0) by a central stalk formed by the gamma and epsilon chains, while a peripheral stalk is formed by the delta and b chains.

The protein resides in the cell inner membrane. Key component of the proton channel; it plays a direct role in the translocation of protons across the membrane. In Photobacterium profundum (strain SS9), this protein is ATP synthase subunit a 1.